Reading from the N-terminus, the 388-residue chain is (S)-8-oxocitronellyl enol synthase (388 aa).

NADP(+)-binding positions include 38 to 40 (TGI), 66 to 67 (RR), 84 to 85 (DV), 108 to 109 (SW), and glutamine 142. Residues lysine 146 and tyrosine 178 contribute to the active site. Substrate-binding residues include lysine 146 and tyrosine 178. Residues tyrosine 178, valine 204, and 211-213 (SMM) each bind NADP(+). Serine 349 lines the substrate pocket.

The protein belongs to the short-chain dehydrogenases/reductases (SDR) family. Highly divergent. In terms of assembly, homodimer. Expressed in internal phloem-associated parenchyma (IPAP) cells.

The protein resides in the cytoplasm. The protein localises to the cytosol. It carries out the reaction (S)-8-oxocitronellyl enol + NADP(+) = (6E)-8-oxogeranial + NADPH + H(+). The enzyme catalyses (S)-8-oxocitronellyl enol + NAD(+) = (6E)-8-oxogeranial + NADH + H(+). Functionally, iridoid synthase that catalyzes the first step in generation of the iridoid ring scaffold using the linear monoterpene (6E)-8-oxogeranial as substrate. Iridoids comprise a large family of distinctive bicyclic monoterpenes that possess a wide range of pharmacological activities, including anticancer, anti-inflammatory, antifungal and antibacterial activities. The sequence is that of (S)-8-oxocitronellyl enol synthase from Catharanthus roseus (Madagascar periwinkle).